The sequence spans 704 residues: DNA-directed DNA polymerase (704 aa).

The tract at residues 1-187 is 3'-5'exonuclease; it reads MIVSDIEANA…TKALLEKLLS (187 aa). 3 residues coordinate Mg(2+): aspartate 5, glutamate 7, and aspartate 174. Residues 202–704 form a polymerase region; sequence GYTTFWSESL…KMGPNWAICH (503 aa). The binding to host TrxA stretch occupies residues 262–338; that stretch reads GSWYQPKGGT…VEHVVFNPSS (77 aa). The Mg(2+) site is built by aspartate 475 and alanine 476. 4 residues coordinate substrate: histidine 506, arginine 518, lysine 522, and tyrosine 526. Mg(2+) is bound at residue aspartate 654.

The protein belongs to the DNA polymerase type-A family. As to quaternary structure, composed of two subunits. One is encoded by the phage and the other is encoded by the host thioredoxin. Interacts with DNA primase/helicase; this interaction is essential for the coordination of DNA unwinding and nucleotide polymerization on duplex DNA. Interacts with the ssDNA-binding protein. Part of the replicase complex that includes the DNA polymerase, thioredoxin, the primase/helicase and the single-stranded DNA binding protein. Mg(2+) is required as a cofactor.

It carries out the reaction DNA(n) + a 2'-deoxyribonucleoside 5'-triphosphate = DNA(n+1) + diphosphate. Replicates viral genomic DNA. This polymerase possesses two enzymatic activities: DNA synthesis (polymerase) and an exonucleolytic activity that degrades single-stranded DNA in the 3'-5' direction. Non-processive DNA polymerase that achieves processivity by binding to host thioredoxin (TrxA). This interaction increases the rate of dNTP incorporation to yield a processivity of approximately 800 nucleotides (nt) per binding event. Interacts with DNA helicase gp4 to coordinate nucleotide polymerization with unwinding of the DNA. The leading strand is synthesized continuously while synthesis of the lagging strand requires the synthesis of oligoribonucleotides by the primase domain of gp4. The sequence is that of DNA-directed DNA polymerase from Escherichia phage T7 (Bacteriophage T7).